A 148-amino-acid chain; its full sequence is MCGIMRVYRVYNAYKIVGAVIFSMSIIVILYISIILHSLKLSFSIILAVDILIIALFAYIFLKPKKLVVLDNGIKVDNEFYSWDEVIEFFVSLNSIQINLKGKREETFNWETPGLFKYRPQIEYVVKKDAELLKILREKIENKERKRG.

2 helical membrane passes run 16–36 (IVGA…SIIL) and 41–61 (LSFS…AYIF).

This sequence to M.jannaschii MJ0696.

It localises to the cell membrane. This is an uncharacterized protein from Methanocaldococcus jannaschii (strain ATCC 43067 / DSM 2661 / JAL-1 / JCM 10045 / NBRC 100440) (Methanococcus jannaschii).